Reading from the N-terminus, the 268-residue chain is Ubiquinone biosynthesis protein COQ4 homolog, mitochondrial (268 aa).

The N-terminal 25 residues, 1 to 25 (MMQRCLRLQKPLALRRGLHLAQVNS), are a transit peptide targeting the mitochondrion. Residues His171, Asp172, His175, and Glu187 each contribute to the Zn(2+) site.

Belongs to the COQ4 family. Component of a multi-subunit COQ enzyme complex. Zn(2+) is required as a cofactor.

It localises to the mitochondrion inner membrane. It catalyses the reaction a 4-hydroxy-3-methoxy-5-(all-trans-polyprenyl)benzoate + H(+) = a 2-methoxy-6-(all-trans-polyprenyl)phenol + CO2. The protein operates within cofactor biosynthesis; ubiquinone biosynthesis. Lyase that catalyzes the C1-decarboxylation of 4-hydroxy-3-methoxy-5-(all-trans-polyprenyl)benzoic acid into 2-methoxy-6-(all-trans-polyprenyl)phenol during ubiquinone biosynthesis. This chain is Ubiquinone biosynthesis protein COQ4 homolog, mitochondrial, found in Drosophila simulans (Fruit fly).